Here is a 361-residue protein sequence, read N- to C-terminus: Tyrosine--tRNA ligase (361 aa).

Positions 36, 162, 166, 169, and 184 each coordinate L-tyrosine. Residues 236-240 carry the 'KMSKS' region motif; it reads KMSKS. Residue Lys239 coordinates ATP.

The protein belongs to the class-I aminoacyl-tRNA synthetase family. TyrS type 4 subfamily. In terms of assembly, homodimer.

The protein localises to the cytoplasm. It carries out the reaction tRNA(Tyr) + L-tyrosine + ATP = L-tyrosyl-tRNA(Tyr) + AMP + diphosphate + H(+). Functionally, catalyzes the attachment of tyrosine to tRNA(Tyr) in a two-step reaction: tyrosine is first activated by ATP to form Tyr-AMP and then transferred to the acceptor end of tRNA(Tyr). This is Tyrosine--tRNA ligase from Saccharolobus islandicus (strain L.S.2.15 / Lassen #1) (Sulfolobus islandicus).